We begin with the raw amino-acid sequence, 273 residues long: Large ribosomal subunit protein uL2 (273 aa).

The interval 223-273 is disordered; that stretch reads VVMNPVDHPMGGGEGRSSGGRHPCTPWGVPTKGHKTRSNKSTDKYIVKRRG. Residues 262 to 273 are compositionally biased toward basic and acidic residues; sequence KSTDKYIVKRRG.

The protein belongs to the universal ribosomal protein uL2 family. As to quaternary structure, part of the 50S ribosomal subunit. Forms a bridge to the 30S subunit in the 70S ribosome.

One of the primary rRNA binding proteins. Required for association of the 30S and 50S subunits to form the 70S ribosome, for tRNA binding and peptide bond formation. It has been suggested to have peptidyltransferase activity; this is somewhat controversial. Makes several contacts with the 16S rRNA in the 70S ribosome. This is Large ribosomal subunit protein uL2 from Syntrophus aciditrophicus (strain SB).